Reading from the N-terminus, the 317-residue chain is Retinol dehydrogenase 7 (317 aa).

NADP(+) is bound at residue 33–57 (FITGCDSGFGNLLARQLDRRGMRVL). Substrate is bound at residue S164. Residue Y176 is the Proton acceptor of the active site.

It belongs to the short-chain dehydrogenases/reductases (SDR) family.

Its subcellular location is the microsome. It localises to the endoplasmic reticulum. The catalysed reaction is all-trans-retinol--[retinol-binding protein] + NAD(+) = all-trans-retinal--[retinol-binding protein] + NADH + H(+). It functions in the pathway cofactor metabolism; retinol metabolism. Its function is as follows. Acts on retinol bound on cellular retinol-binding protein (CRBP). In Rattus norvegicus (Rat), this protein is Retinol dehydrogenase 7.